A 41-amino-acid chain; its full sequence is Diuretic hormone 1 (41 aa).

The residue at position 41 (isoleucine 41) is an Isoleucine amide.

Its subcellular location is the secreted. In terms of biological role, regulation of fluid secretion. May stimulate primary urine secretion by Malpighian tubules and causes a dose-dependent stimulation of cAMP levels in the tubules. This Hyles lineata (White-lined sphinx moth) protein is Diuretic hormone 1.